An 82-amino-acid polypeptide reads, in one-letter code: Small ribosomal subunit protein bS16 (82 aa).

The protein belongs to the bacterial ribosomal protein bS16 family.

This is Small ribosomal subunit protein bS16 from Photorhabdus laumondii subsp. laumondii (strain DSM 15139 / CIP 105565 / TT01) (Photorhabdus luminescens subsp. laumondii).